The chain runs to 1244 residues: ATP-dependent helicase/nuclease subunit A (1244 aa).

In terms of domain architecture, UvrD-like helicase ATP-binding spans 4–477 (TKWTEEQLSA…IQLYKNFRSR (474 aa)). Residue 25 to 32 (AAAGSGKT) coordinates ATP. A UvrD-like helicase C-terminal domain is found at 517 to 811 (KNVDDIIGGP…RIMSIHKSKG (295 aa)).

Belongs to the helicase family. AddA subfamily. In terms of assembly, heterodimer of AddA and AddB/RexB. The cofactor is Mg(2+).

It catalyses the reaction Couples ATP hydrolysis with the unwinding of duplex DNA by translocating in the 3'-5' direction.. It carries out the reaction ATP + H2O = ADP + phosphate + H(+). The heterodimer acts as both an ATP-dependent DNA helicase and an ATP-dependent, dual-direction single-stranded exonuclease. Recognizes the chi site generating a DNA molecule suitable for the initiation of homologous recombination. The AddA nuclease domain is required for chi fragment generation; this subunit has the helicase and 3' -&gt; 5' nuclease activities. The sequence is that of ATP-dependent helicase/nuclease subunit A from Clostridium botulinum (strain Alaska E43 / Type E3).